The following is a 66-amino-acid chain: Surface composition regulator (66 aa).

It belongs to the GlgS family.

Its function is as follows. Major determinant of cell surface composition. Negatively regulates motility, adhesion and synthesis of biofilm exopolysaccharides. The chain is Surface composition regulator from Shigella flexneri.